Consider the following 286-residue polypeptide: Ribosomal RNA small subunit methyltransferase H (286 aa).

S-adenosyl-L-methionine-binding positions include 25-27 (GGH), Asp45, Leu79, Asp93, and Gln100.

Belongs to the methyltransferase superfamily. RsmH family.

The protein resides in the cytoplasm. It carries out the reaction cytidine(1402) in 16S rRNA + S-adenosyl-L-methionine = N(4)-methylcytidine(1402) in 16S rRNA + S-adenosyl-L-homocysteine + H(+). Functionally, specifically methylates the N4 position of cytidine in position 1402 (C1402) of 16S rRNA. In Petrotoga mobilis (strain DSM 10674 / SJ95), this protein is Ribosomal RNA small subunit methyltransferase H.